Reading from the N-terminus, the 76-residue chain is Parvalbumin beta 3 (76 aa).

Residue Ala1 is modified to N-acetylalanine. Residues 31 to 66 (KSPEEVKKFFAIIDQDHSGFIEEEELKLFLQTFSAG) enclose the EF-hand domain. Ca(2+) contacts are provided by Asp44, Asp46, Ser48, Phe50, Glu52, and Glu55.

This sequence belongs to the parvalbumin family.

Its function is as follows. In muscle, parvalbumin is thought to be involved in relaxation after contraction. It binds two calcium ions. The polypeptide is Parvalbumin beta 3 (Merluccius polylepis (Southern hake)).